The chain runs to 286 residues: Pyridoxal kinase PdxY (286 aa).

Substrate contacts are provided by residues serine 9 and 44-45; that span reads TQ. Residues aspartate 111, alanine 143, glutamate 148, lysine 181, and 208–211 each bind ATP; that span reads RPLV. Position 223 (aspartate 223) interacts with substrate.

It belongs to the pyridoxine kinase family. PdxY subfamily. In terms of assembly, homodimer. Mg(2+) serves as cofactor.

The enzyme catalyses pyridoxal + ATP = pyridoxal 5'-phosphate + ADP + H(+). The protein operates within cofactor metabolism; pyridoxal 5'-phosphate salvage; pyridoxal 5'-phosphate from pyridoxal: step 1/1. Functionally, pyridoxal kinase involved in the salvage pathway of pyridoxal 5'-phosphate (PLP). Catalyzes the phosphorylation of pyridoxal to PLP. The chain is Pyridoxal kinase PdxY from Yersinia pestis bv. Antiqua (strain Antiqua).